The chain runs to 129 residues: Large ribosomal subunit protein bL19 (129 aa).

It belongs to the bacterial ribosomal protein bL19 family.

Functionally, this protein is located at the 30S-50S ribosomal subunit interface and may play a role in the structure and function of the aminoacyl-tRNA binding site. The sequence is that of Large ribosomal subunit protein bL19 from Methylobacillus flagellatus (strain ATCC 51484 / DSM 6875 / VKM B-1610 / KT).